Consider the following 2190-residue polypeptide: Voltage-dependent L-type calcium channel subunit alpha-1D (2190 aa).

The segment covering 1–10 (MQHHQQQQPE) has biased composition (low complexity). 2 disordered regions span residues 1-44 (MQHH…SKQT) and 57-96 (QAKA…SNSR). The Cytoplasmic portion of the chain corresponds to 1–121 (MQHHQQQQPE…RACISLVEWK (121 aa)). Composition is skewed to polar residues over residues 31–44 (PTTQ…SKQT) and 63–76 (NMNT…GSLS). The span at 77-88 (QRKRQQYAKSKK) shows a compositional bias: basic residues. One copy of the I repeat lies at 108 to 404 (NPIRRACISL…LVLGVLSGEF (297 aa)). Residues 122 to 140 (PFDIFILLSIFANCVALAV) form a helical membrane-spanning segment. Topologically, residues 141–158 (YIPFPEDDSNSTNHNLEK) are extracellular. The N-linked (GlcNAc...) asparagine glycan is linked to asparagine 150. A helical transmembrane segment spans residues 159–178 (VEYAFLIIFTVETFLKIIAY). The Cytoplasmic segment spans residues 179–190 (GLLLHPNAYVRN). The helical transmembrane segment at 191–209 (GWNLLDFVIVVVGLFSVIL) threads the bilayer. Over 210 to 230 (EQLTKETEGGSHSGGKPGGFD) the chain is Extracellular. Residues 231–249 (VKALRAFRVLRPLRLVSGV) traverse the membrane as a helical segment. The Cytoplasmic portion of the chain corresponds to 250–268 (PSLQVVLNSIIKAMVPLLH). A helical transmembrane segment spans residues 269–288 (IALLVLFVIIIYAIIGLELF). The Extracellular segment spans residues 289 to 376 (IGKMHKSCFL…WVNDAIGCEW (88 aa)). A glycan (N-linked (GlcNAc...) asparagine) is linked at asparagine 324. Glutamate 359 provides a ligand contact to Ca(2+). A helical transmembrane segment spans residues 377 to 401 (PWIYFVSLIILGSFFVLNLVLGVLS). The Cytoplasmic portion of the chain corresponds to 402 to 544 (GEFSKEREKA…RKCRAAVKSV (143 aa)). A binding to the beta subunit region spans residues 424–441 (QQLEEDLKGYLDWITQAE). A disordered region spans residues 478 to 500 (GRSSNKHASMPTSETESVNTENV). The II repeat unit spans residues 530 to 776 (NRFNRRKCRA…VFLAIAVDNL (247 aa)). The helical transmembrane segment at 545-564 (TFYWLVIVLVFLNTLTISSE) threads the bilayer. At 565–579 (HYNQPDWLTQIQDIA) the chain is on the extracellular side. The helical transmembrane segment at 580-598 (NKVLLALFTCEMLVKMYSL) threads the bilayer. Over 599–606 (GLQAYFVS) the chain is Cytoplasmic. Residues 607–625 (LFNRFDCFVVCGGIVETIL) traverse the membrane as a helical segment. Residues 626-635 (VELEIMSPLG) lie on the Extracellular side of the membrane. The helical transmembrane segment at 636–654 (ISVFRCVRLLRIFKVTRHW) threads the bilayer. The Cytoplasmic portion of the chain corresponds to 655 to 673 (ASLSNLVASLLNSMKSIAS). The chain crosses the membrane as a helical span at residues 674-694 (LLLLLFLFIIIFSLLGMQLFG). The Extracellular portion of the chain corresponds to 695 to 748 (GKFNFDETQTKRSTFDNFPQALLTVFQILTGEDWNAVMYDGIMAYGGPSSSGMI). Glutamate 726 is a Ca(2+) binding site. Residues 749-773 (VCIYFIILFICGNYILLNVFLAIAV) form a helical membrane-spanning segment. The Cytoplasmic segment spans residues 774–907 (DNLADAESLN…VGCHRLINHH (134 aa)). The span at 787 to 823 (KEEAEEKERKKNARKESLENKKSEKSEGDQKKPKDSK) shows a compositional bias: basic and acidic residues. The tract at residues 787 to 869 (KEEAEEKERK…VPAGPRPRRI (83 aa)) is disordered. Residues 847–859 (VGEDEEDEEDEPE) show a composition bias toward acidic residues. Residues 894–1176 (NPIRVGCHRL…IFVGFVIVTF (283 aa)) form an III repeat. A helical transmembrane segment spans residues 908-926 (IFTNLILVFIMLSSVSLAA). Topologically, residues 927-942 (EDPIRSHSFRNNILGY) are extracellular. The chain crosses the membrane as a helical span at residues 943–962 (ADYVFTSMFTFEIILKMTAF). Topologically, residues 963–974 (GAFLHKGSFCRN) are cytoplasmic. The chain crosses the membrane as a helical span at residues 975 to 993 (YFNLLDLLVVGVSLVSFGI). Over 994–999 (QSSAIS) the chain is Extracellular. A helical membrane pass occupies residues 1000 to 1019 (VVKILRVLRVLRPLRAINRA). Topologically, residues 1020–1038 (KGLKHVVQCVFVAIRTIGN) are cytoplasmic. The helical transmembrane segment at 1039-1058 (IMIVTTLLQFMFACIGVQLF) threads the bilayer. Topologically, residues 1059-1148 (KGKFYKCTDE…VGPVYNYRVE (90 aa)) are extracellular. Residues 1096 to 1186 (RVWQNSDFNF…QEQGEQEYKN (91 aa)) are dihydropyridine binding. A Ca(2+)-binding site is contributed by glutamate 1122. Residues 1149-1169 (ISIFFIIYIIIIAFFMMNIFV) traverse the membrane as a helical segment. Over 1170 to 1226 (GFVIVTFQEQGEQEYKNCELDKNQRQCVEYALKARPLRRYIPKNPYQYKFWYVVNST) the chain is Cytoplasmic. Residues 1213–1496 (NPYQYKFWYV…LFVAVIMDNF (284 aa)) form an IV repeat. A helical transmembrane segment spans residues 1227 to 1245 (GFEYIMFVLIMLNTLCLAM). The Extracellular segment spans residues 1246 to 1260 (QHYGQSKLFNDAMDI). A helical membrane pass occupies residues 1261–1280 (MNMVFTGVFTVEMVLKLIAF). The Cytoplasmic segment spans residues 1281–1297 (KPKIFVRKKERWLGYFS). A helical membrane pass occupies residues 1298-1319 (DAWNTFDSLIVIGSIVDVVLSE). Residues 1320 to 1342 (ADPKPTETVTTDESGNSEDSARI) lie on the Extracellular side of the membrane. A helical membrane pass occupies residues 1343 to 1362 (SITFFRLFRVMRLVKLLSRG). Residues 1363–1381 (EGIRTLLWTFIKSFQALPY) lie on the Cytoplasmic side of the membrane. Residues 1382–1401 (VALLIAMLFFIYAVIGMQVF) form a helical membrane-spanning segment. Residues 1402–1468 (GKVAMRDNNQ…GEEYTCGSNF (67 aa)) lie on the Extracellular side of the membrane. A dihydropyridine binding region spans residues 1449–1515 (RCDPESDYNP…LGPHHLDEFK (67 aa)). Residues 1461–1504 (EYTCGSNFAIIYFISFYMLCAFLIINLFVAVIMDNFDYLTRDWS) are phenylalkylamine binding. A helical transmembrane segment spans residues 1469 to 1493 (AIIYFISFYMLCAFLIINLFVAVIM). The Cytoplasmic segment spans residues 1494-2190 (DNFDYLTRDW…ADEMICITSL (697 aa)). 4 disordered regions span residues 1736–1787 (THRP…NANL), 1803–1833 (FGSH…SRRT), 1917–1952 (HGFF…RSSF), and 1995–2025 (SSKA…HTPY). A compositionally biased stretch (basic and acidic residues) spans 1805–1823 (SHEHRSENGYHSYSRADHE). Residues 1824 to 1833 (KRRRPSSRRT) are compositionally biased toward basic residues.

Belongs to the calcium channel alpha-1 subunit (TC 1.A.1.11) family. CACNA1D subfamily. In terms of assembly, voltage-dependent calcium channels are multisubunit complexes, consisting of alpha-1, alpha-2, beta and delta subunits in a 1:1:1:1 ratio. The channel activity is directed by the pore-forming and voltage-sensitive alpha-1 subunit. In many cases, this subunit is sufficient to generate voltage-sensitive calcium channel activity. The auxiliary subunits beta and alpha-2/delta linked by a disulfide bridge regulate the channel activity. Interacts with RIMBP2. As to expression, expressed in the basilar papilla of the cochlea.

Its subcellular location is the membrane. It carries out the reaction Ca(2+)(in) = Ca(2+)(out). The isoform alpha-1D gives rise to L-type calcium currents. Long-lasting (L-type) calcium channels belong to the 'high-voltage activated' (HVA) group. This chain is Voltage-dependent L-type calcium channel subunit alpha-1D (CACNA1D), found in Gallus gallus (Chicken).